The sequence spans 595 residues: Guanylate-binding protein 3 (595 aa).

The tract at residues 1 to 309 (MAPEIHMTGP…NAISRGDLPC (309 aa)) is GTPase domain (Globular). Residues 35–276 (TQPVVVVAIV…FCSYIFSNSK (242 aa)) enclose the GB1/RHD3-type G domain. Residues 45-52 (GLYRTGKS), 67-69 (LGS), and 97-101 (DTEGL) contribute to the GTP site. The stretch at 482 to 595 (EKEKEIEVEC…KRYMSHKLKI (114 aa)) forms a coiled coil.

It belongs to the TRAFAC class dynamin-like GTPase superfamily. GB1/RHD3 GTPase family. GB1 subfamily. As to quaternary structure, heterodimer with other family members, including GBP1, GBP2 and GBP5. Dimerization regulates subcellular location.

The protein localises to the cytoplasm. Its subcellular location is the perinuclear region. It localises to the golgi apparatus membrane. The catalysed reaction is GTP + H2O = GDP + phosphate + H(+). Interferon (IFN)-inducible GTPase that plays important roles in innate immunity against a diverse range of bacterial, viral and protozoan pathogens. Hydrolyzes GTP very efficiently; GDP rather than GMP is the major reaction product. Following infection, recruited to the pathogen-containing vacuoles or vacuole-escaped bacteria and acts as a positive regulator of inflammasome assembly by promoting the release of inflammasome ligands from bacteria. Acts by promoting lysis of pathogen-containing vacuoles, releasing pathogens into the cytosol. Following pathogen release in the cytosol, promotes recruitment of proteins that mediate bacterial cytolysis: this liberates ligands that are detected by inflammasomes, such as lipopolysaccharide (LPS) that activates the non-canonical CASP4/CASP11 inflammasome or double-stranded DNA (dsDNA) that activates the AIM2 inflammasome. Exhibits antiviral activity against influenza virus. Functionally, shows the most prominent antiviral activity in epithelial cells. The polypeptide is Guanylate-binding protein 3 (GBP3) (Homo sapiens (Human)).